A 281-amino-acid polypeptide reads, in one-letter code: Urease accessory protein UreD 2 (281 aa).

It belongs to the UreD family. In terms of assembly, ureD, UreF and UreG form a complex that acts as a GTP-hydrolysis-dependent molecular chaperone, activating the urease apoprotein by helping to assemble the nickel containing metallocenter of UreC. The UreE protein probably delivers the nickel.

It is found in the cytoplasm. Its function is as follows. Required for maturation of urease via the functional incorporation of the urease nickel metallocenter. This chain is Urease accessory protein UreD 2, found in Pseudomonas syringae pv. syringae (strain B728a).